Here is a 532-residue protein sequence, read N- to C-terminus: MAYLGVDTSRIAGTQPLEMLLISSSSPDPHSTIIIDPRTGVSSWSYKGGELQGASTGLVEPLGKDGEHIVVTTKDRPLVHVIAVHSKDRFHQKCVLPGPVSAICSDRSGRFAFMSIKRQLYCWLLSTGELLSVIDAHYQNITKLALSDDDSMVFTASKDGAIHGYLVTELVSADRDSTVAPFRKWASHTLAVSDLKITHGSNPRILTTGADHIACLHSISMDSVILKASADRPLTSCAIDSAETRIFIGTEVGNIAQINLFQLGAEERDLLIQAGDEHNTKFRVLNGHSDEITRLTINTDGTLLASGDASGKYCIWEISSHQCLKVSTMRSTISTLRFIPFWPTISGGEHTKKFRPVWDLRREPTKCERLAIEVSNEFNADQKHWNDVIEDSIDQMLLESGSTTSAQLQWQVEAPMRKQAEVEKAEAEAMAQVITLGDDEDDAPEVGNQRRQNKKNNKKNRKLQKKLEAEQALKNKVIEEEAELIVIDDGEESNKKILDLQASMTELREENEKLKEINRQMYEFVAAEIVDR.

WD repeat units follow at residues 136 to 175 (AHYQ…SADR) and 287 to 326 (GHSD…CLKV). Positions 435 to 464 (TLGDDEDDAPEVGNQRRQNKKNNKKNRKLQ) are disordered. A coiled-coil region spans residues 445-526 (EVGNQRRQNK…INRQMYEFVA (82 aa)). The span at 451–464 (RQNKKNNKKNRKLQ) shows a compositional bias: basic residues.

Belongs to the WD repeat IPI3/WDR18 family. Component of the PELP1 complex, composed of at least PELP1, TEX10 and WDR18. The complex interacts with pre-60S ribosome particles.

The protein resides in the nucleus. Its subcellular location is the nucleolus. The protein localises to the nucleoplasm. Component of the PELP1 complex involved in the nucleolar steps of 28S rRNA maturation and the subsequent nucleoplasmic transit of the pre-60S ribosomal subunit. Required for processing ITS2 sequences from rRNA intermediates during 26S rRNA maturation. Required in the soma to promote normal proliferation and prevent germline tumor formation. The sequence is that of Pre-rRNA-processing protein pro-1 (pro-1) from Caenorhabditis briggsae.